The primary structure comprises 454 residues: Histidine--tRNA ligase (454 aa).

Belongs to the class-II aminoacyl-tRNA synthetase family. As to quaternary structure, homodimer.

It localises to the cytoplasm. The enzyme catalyses tRNA(His) + L-histidine + ATP = L-histidyl-tRNA(His) + AMP + diphosphate + H(+). The protein is Histidine--tRNA ligase of Porphyromonas gingivalis (strain ATCC BAA-308 / W83).